We begin with the raw amino-acid sequence, 129 residues long: Gas vesicle protein C (129 aa).

3 repeats span residues 19-51, 52-84, and 85-117; these read VTQL…LHQF, HQNL…LHKF, and HQNL…LQQF. The segment at 19-117 is 3 X 33 AA tandem repeats; sequence VTQLFRETHE…KAQSQYLQQF (99 aa).

It belongs to the gas vesicle GvpC family.

The protein resides in the gas vesicle. Confers stability, involved in shaping gas vesicles, hollow, gas filled proteinaceous nanostructures. During planktonic growth they allow positioning of the organism at a favorable depth for light or nutrient acquisition. In terms of biological role, cluster expression in E.coli (gvpA1-gvpA2-gvpC-gvpN-gvpJ-gvpK-gvpF-gvpG-gvpV-gvpW) allows cells to float and produces irregularly shaped gas vesicles. This is Gas vesicle protein C from Nostoc sp. (strain PCC 7120 / SAG 25.82 / UTEX 2576).